Reading from the N-terminus, the 71-residue chain is Protein translocase subunit SecE (71 aa).

The chain crosses the membrane as a helical span at residues 43 to 63; that stretch reads VAGVGILAVGAIGFIIYVLLT.

It belongs to the SecE/SEC61-gamma family. Component of the Sec protein translocase complex. Heterotrimer consisting of SecY (alpha), SecG (beta) and SecE (gamma) subunits. The heterotrimers can form oligomers, although 1 heterotrimer is thought to be able to translocate proteins. Interacts with the ribosome. May interact with SecDF, and other proteins may be involved.

The protein localises to the cell membrane. Its function is as follows. Essential subunit of the Sec protein translocation channel SecYEG. Clamps together the 2 halves of SecY. May contact the channel plug during translocation. In Methanosarcina barkeri (strain Fusaro / DSM 804), this protein is Protein translocase subunit SecE.